A 143-amino-acid chain; its full sequence is Transcriptional regulator MraZ (143 aa).

SpoVT-AbrB domains follow at residues 5 to 47 and 76 to 119; these read TFTP…PRNV and ADEQ…NAES.

Belongs to the MraZ family. Forms oligomers.

The protein resides in the cytoplasm. Its subcellular location is the nucleoid. This Corynebacterium kroppenstedtii (strain DSM 44385 / JCM 11950 / CIP 105744 / CCUG 35717) protein is Transcriptional regulator MraZ.